The sequence spans 468 residues: Probable 1,4-beta-D-glucan cellobiohydrolase C (468 aa).

The signal sequence occupies residues 1-18; that stretch reads MGRVSSLALALLLPAVQA. One can recognise a CBM1 domain in the interval 19–54; sequence QQTLWGQCGGIGWTGPTNCVAGAACSTQNPYYAQCL. 2 disulfides stabilise this stretch: Cys-26–Cys-43 and Cys-37–Cys-53. The segment at 57 to 106 is thr-rich linker; that stretch reads TATTSTTLTTTTRVTTTTTSTTSKSSSTGSTTTTKSTGTTTTSGSSTTIT. The tract at residues 68–107 is disordered; sequence TRVTTTTTSTTSKSSSTGSTTTTKSTGTTTTSGSSTTITS. The tract at residues 107 to 468 is catalytic; sequence SAPSGNPFSG…QLLKNANPAF (362 aa). Asp-198 is a catalytic residue. Cystine bridges form between Cys-199/Cys-258 and Cys-390/Cys-437. The active-site Proton donor is the Asp-244. The active-site Nucleophile is Asp-423.

It belongs to the glycosyl hydrolase 6 (cellulase B) family.

The protein resides in the secreted. It catalyses the reaction Hydrolysis of (1-&gt;4)-beta-D-glucosidic linkages in cellulose and cellotetraose, releasing cellobiose from the non-reducing ends of the chains.. In terms of biological role, the biological conversion of cellulose to glucose generally requires three types of hydrolytic enzymes: (1) Endoglucanases which cut internal beta-1,4-glucosidic bonds; (2) Exocellobiohydrolases that cut the disaccharide cellobiose from the non-reducing end of the cellulose polymer chain; (3) Beta-1,4-glucosidases which hydrolyze the cellobiose and other short cello-oligosaccharides to glucose. This is Probable 1,4-beta-D-glucan cellobiohydrolase C (cbhC) from Aspergillus terreus (strain NIH 2624 / FGSC A1156).